Consider the following 345-residue polypeptide: Telomere-binding protein cav (345 aa).

The interval 115-337 is required for binding to Su(var)205; it reads RRKMVQPYPE…TITFQNTESE (223 aa). Disordered stretches follow at residues 145–180 and 200–231; these read RLDR…HEDQ and PPGV…INRP. Short sequence motifs (su(var)205-binding Pro-containing repeat) lie at residues 231 to 237 and 298 to 304; these read PETEINE and PETEMNE.

In terms of assembly, component of the HipHop-HOAP telomere capping complex, composed of at least HipHop and cav/HOAP, and may include Su(var)205/HP1; HipHop and cav/HOAP, but not Su(var)205, are interdependent for their protein stability. Interacts with HipHop (via N-terminus). Interacts (via C-terminus) with Su(var)205/HP1 dimer (via hinge and chromoshadow domain) and Orc1; possibly interacts with other components of the origin recognition complex (ORC). Each molecule of cav/HOAP interacts with 2 molecules of Su(var)205/HP1. The HipHop-HOAP complex recruits the MTV complex, consisting of moi/modigliani, tea and ver/verrocchio, to telomeres, forming the terminin telomere-capping complex. Interacts with moi/modigliani; the interaction is direct. Interacts with ver/verrochio; the interaction is direct. Interacts with HP6, which is also part of the terminin complex. Interacts (via N-terminus) with peo/pendolino (via N-terminus); the interaction is direct.

The protein localises to the nucleus. Its subcellular location is the chromosome. It localises to the telomere. Functionally, part of the HipHop-HOAP complex that recruits the MTV complex to form the terminin telomere-capping complex, which binds to chromosome ends in a sequence-independent manner and prevents telomere fusion. Telomere capping is independent of the origin recognition complex (ORC). In Drosophila melanogaster (Fruit fly), this protein is Telomere-binding protein cav.